A 1194-amino-acid polypeptide reads, in one-letter code: Phosphatidylinositol-3,5-bisphosphate 3-phosphatase MTMR3 (1194 aa).

The residue at position 4 (Ser-4) is a Phosphoserine. The 422-residue stretch at 151 to 572 (EHVTSRFKNE…RNLMLWSAVY (422 aa)) folds into the Myotubularin phosphatase domain. A 1,2-diacyl-sn-glycero-3-phospho-(1D-myo-inositol-3,5-bisphosphate) contacts are provided by Asn-322, Asn-347, and Ile-348. A 1,2-diacyl-sn-glycero-3-phospho-(1D-myo-inositol-3-phosphate) is bound by residues Asn-322, Asn-347, and Ile-348. Cys-409 (phosphocysteine intermediate) is an active-site residue. A 1,2-diacyl-sn-glycero-3-phospho-(1D-myo-inositol-3,5-bisphosphate)-binding residues include Ser-410, Asp-411, Gly-412, Trp-413, Asp-414, Arg-415, Lys-451, and Arg-455. Residues Ser-410, Asp-411, Gly-412, Trp-413, Asp-414, and Arg-415 each contribute to the a 1,2-diacyl-sn-glycero-3-phospho-(1D-myo-inositol-3-phosphate) site. Position 455 (Arg-455) interacts with a 1,2-diacyl-sn-glycero-3-phospho-(1D-myo-inositol-3-phosphate). Residues 583–609 (DDSCAPYPAPGTSPDEPPLSRLPKTRS) form a disordered region. The span at 589 to 599 (YPAPGTSPDEP) shows a compositional bias: pro residues. Residues Ser-609, Ser-629, Ser-643, and Ser-647 each carry the phosphoserine modification. Over residues 693 to 724 (TKEESGVEEPTHREHTEVPEVKEEAPLAKESR) the composition is skewed to basic and acidic residues. Disordered stretches follow at residues 693–731 (TKEE…QGSG), 852–871 (ESGP…RFSG), and 876–897 (PIAP…HRTS). Residue Thr-725 is modified to Phosphothreonine. Residue Ser-904 is modified to Phosphoserine. Disordered stretches follow at residues 932-971 (NKAS…HQLS) and 988-1017 (KWLN…DGMP). A compositionally biased stretch (polar residues) spans 991–1006 (NSHSGRPSTTNSPEQP). Residues 1025–1058 (QRLRQIESGHQQEVETLKKQVQELKSRLESQYLT) are a coiled coil. Residue Ser-1060 is modified to Phosphoserine. An FYVE-type zinc finger spans residues 1115-1175 (DHLAAHCYAC…VCKSCYSSLH (61 aa)). Zn(2+)-binding residues include Cys-1121, Cys-1124, Cys-1137, Cys-1140, Cys-1145, Cys-1148, Cys-1167, and Cys-1170.

This sequence belongs to the protein-tyrosine phosphatase family. Non-receptor class myotubularin subfamily. As to quaternary structure, forms heterodimers with MTMR4 that recruit both CEP55 and PLK1; occurs during early mitosis, regulates the phosphorylation of CEP55 by PLK1 and its recruitment to the midbody where it mediates cell abscission.

It is found in the cytoplasm. Its subcellular location is the cytosol. The protein resides in the membrane. It carries out the reaction a 1,2-diacyl-sn-glycero-3-phospho-(1D-myo-inositol-3,5-bisphosphate) + H2O = a 1,2-diacyl-sn-glycero-3-phospho-(1D-myo-inositol-5-phosphate) + phosphate. The catalysed reaction is a 1,2-diacyl-sn-glycero-3-phospho-(1D-myo-inositol-3-phosphate) + H2O = a 1,2-diacyl-sn-glycero-3-phospho-(1D-myo-inositol) + phosphate. It catalyses the reaction 1,2-dihexadecanoyl-sn-glycero-3-phospho-(1D-myo-inositol-3-phosphate) + H2O = 1,2-dihexadecanoyl-sn-glycero-3-phospho-(1D-myo-inositol) + phosphate. The enzyme catalyses 1,2-dioctanoyl-sn-glycero-3-phospho-(1-D-myo-inositol-3-phosphate) + H2O = 1,2-dioctanoyl-sn-glycero-3-phospho-(1D-myo-inositol) + phosphate. It carries out the reaction 1,2-dihexadecanoyl-sn-glycero-3-phospho-(1D-myo-inositol-3,5-phosphate) + H2O = 1,2-dihexadecanoyl-sn-glycero-3-phospho-(1D-myo-inositol-5-phosphate) + phosphate. In terms of biological role, lipid phosphatase that specifically dephosphorylates the D-3 position of phosphatidylinositol 3-phosphate and phosphatidylinositol 3,5-bisphosphate, generating phosphatidylinositol and phosphatidylinositol 5-phosphate. Decreases the levels of phosphatidylinositol 3-phosphate, a phospholipid found in cell membranes where it acts as key regulator of both cell signaling and intracellular membrane traffic. Could also have a molecular sequestering/adapter activity and regulate biological processes independently of its phosphatase activity. It includes the regulation of midbody abscission during mitotic cytokinesis. This Rattus norvegicus (Rat) protein is Phosphatidylinositol-3,5-bisphosphate 3-phosphatase MTMR3.